We begin with the raw amino-acid sequence, 75 residues long: Small ribosomal subunit protein eS28 (75 aa).

It belongs to the eukaryotic ribosomal protein eS28 family.

The protein is Small ribosomal subunit protein eS28 of Natronomonas pharaonis (strain ATCC 35678 / DSM 2160 / CIP 103997 / JCM 8858 / NBRC 14720 / NCIMB 2260 / Gabara) (Halobacterium pharaonis).